Reading from the N-terminus, the 236-residue chain is Small ribosomal subunit protein uS2c (236 aa).

This sequence belongs to the universal ribosomal protein uS2 family.

The protein resides in the plastid. The protein localises to the chloroplast. This is Small ribosomal subunit protein uS2c (rps2) from Morus indica (Mulberry).